A 187-amino-acid chain; its full sequence is Probable GTP-binding protein EngB (187 aa).

The 170-residue stretch at K18–F187 folds into the EngB-type G domain. Residues G26–S33, G52–L56, D70–G73, T137–D140, and V168–S170 contribute to the GTP site. Mg(2+)-binding residues include S33 and T54.

This sequence belongs to the TRAFAC class TrmE-Era-EngA-EngB-Septin-like GTPase superfamily. EngB GTPase family. The cofactor is Mg(2+).

Functionally, necessary for normal cell division and for the maintenance of normal septation. This is Probable GTP-binding protein EngB from Mycoplasmopsis synoviae (strain 53) (Mycoplasma synoviae).